The chain runs to 1634 residues: Protein TIC 214 (1634 aa).

The next 5 helical transmembrane spans lie at 25–45 (FIIG…YVAL), 53–73 (ILAL…SFFA), 94–116 (HFIL…LITI), 133–153 (FAWF…LVWI), and 172–192 (IFVI…SIQC). 2 disordered regions span residues 216-242 (RERL…SESE) and 1365-1395 (QQKS…STKS). Positions 1386-1395 (KYLEEDSTKS) are enriched in basic and acidic residues.

This sequence belongs to the TIC214 family. Part of the Tic complex.

It localises to the plastid. It is found in the chloroplast inner membrane. In terms of biological role, involved in protein precursor import into chloroplasts. May be part of an intermediate translocation complex acting as a protein-conducting channel at the inner envelope. The polypeptide is Protein TIC 214 (Cuscuta exaltata (Tall dodder)).